Consider the following 222-residue polypeptide: Germin-like protein subfamily 1 member 13 (222 aa).

The N-terminal stretch at 1-18 is a signal peptide; sequence MRVSKSLILITLSALVIS. Residues cysteine 32 and cysteine 49 are joined by a disulfide bond. Positions 63–214 constitute a Cupin type-1 domain; sequence SGLNQAGSTN…AFQLDVNIVE (152 aa). N-linked (GlcNAc...) asparagine glycosylation occurs at asparagine 78. Residues histidine 111, histidine 113, glutamate 118, and histidine 160 each coordinate Mn(2+).

It belongs to the germin family. Oligomer (believed to be a pentamer but probably hexamer).

It localises to the secreted. Its subcellular location is the extracellular space. The protein resides in the apoplast. May play a role in plant defense. Probably has no oxalate oxidase activity even if the active site is conserved. This is Germin-like protein subfamily 1 member 13 (GLP6) from Arabidopsis thaliana (Mouse-ear cress).